Consider the following 61-residue polypeptide: Large ribosomal subunit protein uL30 (61 aa).

Belongs to the universal ribosomal protein uL30 family. Part of the 50S ribosomal subunit.

The sequence is that of Large ribosomal subunit protein uL30 from Mycobacterium sp. (strain KMS).